Consider the following 354-residue polypeptide: WASH complex subunit 3 (354 aa).

The segment at 76–354 is disordered; that stretch reads SSANVPVHNT…DDDDDDDESW (279 aa). The segment covering 107–143 has biased composition (pro residues); that stretch reads IPPPPPPPPPPMTGVPPPPPPPPPPPISKSNIPPPPA. Acidic residues predominate over residues 150 to 159; the sequence is ESDDDDEDNN. Residues 213–244 show a composition bias toward pro residues; sequence PQPPQPQPQSPSPQPPPPPTTTSSIPVPPPPF. Positions 251-260 are enriched in acidic residues; that stretch reads SDDDDDDDEG. Over residues 277–290 the composition is skewed to low complexity; it reads NNNSNSNSYSNNNN. 2 stretches are compositionally biased toward acidic residues: residues 293-307 and 342-354; these read DDDD…DDDN and DADD…DESW.

Belongs to the CCDC53 family. As to quaternary structure, probable component of the WASH complex.

The polypeptide is WASH complex subunit 3 (Dictyostelium discoideum (Social amoeba)).